A 305-amino-acid polypeptide reads, in one-letter code: Plant-type L-asparaginase (305 aa).

Residue Thr-175 is the Nucleophile of the active site. Substrate is bound by residues Arg-202–Asp-205 and Thr-224–Gly-227.

This sequence belongs to the Ntn-hydrolase family. In terms of assembly, heterotetramer of two alpha and two beta chains arranged as a dimer of alpha/beta heterodimers. In terms of processing, autocleaved. Generates the alpha and beta subunits. The N-terminal residue of the beta subunit is thought to be responsible for the nucleophile hydrolase activity.

It carries out the reaction L-asparagine + H2O = L-aspartate + NH4(+). Functionally, catalyzes the hydrolysis of L-asparagine into L-aspartate and ammonia. This is Plant-type L-asparaginase from Pyrococcus horikoshii (strain ATCC 700860 / DSM 12428 / JCM 9974 / NBRC 100139 / OT-3).